Here is a 352-residue protein sequence, read N- to C-terminus: Sphingosine 1-phosphate receptor 2 (352 aa).

At 1–34 (MGGLYSEYLNPEKVLEHYNYTKETLDMQETTSRK) the chain is on the extracellular side. Residue Asn-19 is glycosylated (N-linked (GlcNAc...) asparagine). The helical transmembrane segment at 35–59 (VASAFIIILCCAIVVENLLVLIAVA) threads the bilayer. Topologically, residues 60 to 66 (RNSKFHS) are cytoplasmic. The helical transmembrane segment at 67–95 (AMYLFLGNLAASDLLAGVAFVANTLLSGH) threads the bilayer. Topologically, residues 96–109 (VTLSLTPVQWFARE) are extracellular. Residues 110–128 (GSAFITLSASVFSLLAIAI) traverse the membrane as a helical segment. Residues 129 to 147 (ERQVALAKVKLYGSDKSCR) lie on the Cytoplasmic side of the membrane. A helical membrane pass occupies residues 148–173 (MLMLIGASWLISLILGGLPILGWNCL). Residues 174–189 (NQLEACSTVLPLYAKH) are Extracellular-facing. Residues 190 to 210 (YVLCVVTIFSVILLAIVALYV) form a helical membrane-spanning segment. At 211 to 233 (RIYFVVRSSHADVAGPQTLALLK) the chain is on the cytoplasmic side. Residues 234-255 (TVTIVLGVFIICWLPAFSILLL) form a helical membrane-spanning segment. Residues 256–271 (DSTCPVRACPVLYKAH) are Extracellular-facing. Residues 272–292 (YFFAFATLNSLLNPVIYTWRS) form a helical membrane-spanning segment. Topologically, residues 293–352 (RDLRREVLRPLQCWRRGKGVTGRRGGNPGHRLLPLRSSSSLERGMHMPTSPTFLEGNTVV) are cytoplasmic. A lipid anchor (S-palmitoyl cysteine) is attached at Cys-305. The disordered stretch occupies residues 333 to 352 (LERGMHMPTSPTFLEGNTVV).

The protein belongs to the G-protein coupled receptor 1 family. As to expression, most abundant in heart and lung; low, but clearly observed in kidney, liver and thymus; much lower but detectable in brain, testis, stomach and intestine. Not significantly detected in any of the sections of embryonic day (E) 14-18, except in embryonic brain.

Its subcellular location is the cell membrane. In terms of biological role, receptor for the lysosphingolipid sphingosine 1-phosphate (S1P). S1P is a bioactive lysophospholipid that elicits diverse physiological effects on most types of cells and tissues. Receptor for the chemokine-like protein FAM19A5. Mediates the inhibitory effect of FAM19A5 on vascular smooth muscle cell proliferation and migration. In lymphoid follicles, couples the binding of S1P to the activation of GNA13 and downstream inhibition of AKT activation leading to suppression of germinal center (GC) B cell growth and migration outside the GC niche. This Mus musculus (Mouse) protein is Sphingosine 1-phosphate receptor 2 (S1pr2).